Consider the following 134-residue polypeptide: Small ribosomal subunit protein uS8c (134 aa).

The protein belongs to the universal ribosomal protein uS8 family. As to quaternary structure, part of the 30S ribosomal subunit.

It localises to the plastid. It is found in the chloroplast. Its function is as follows. One of the primary rRNA binding proteins, it binds directly to 16S rRNA central domain where it helps coordinate assembly of the platform of the 30S subunit. The polypeptide is Small ribosomal subunit protein uS8c (rps8) (Gossypium hirsutum (Upland cotton)).